A 502-amino-acid polypeptide reads, in one-letter code: Lysine--tRNA ligase (502 aa).

E398 and E405 together coordinate Mg(2+).

It belongs to the class-II aminoacyl-tRNA synthetase family. Homodimer. The cofactor is Mg(2+).

It is found in the cytoplasm. It catalyses the reaction tRNA(Lys) + L-lysine + ATP = L-lysyl-tRNA(Lys) + AMP + diphosphate. This is Lysine--tRNA ligase (lysS) from Thermotoga maritima (strain ATCC 43589 / DSM 3109 / JCM 10099 / NBRC 100826 / MSB8).